The chain runs to 612 residues: Rhamnogalacturonan exolyase YesX (612 aa).

Asn119 is a binding site for substrate. Residues Asp120, Asp125, Asp127, Asp129, Glu131, and Glu133 each coordinate Ca(2+). 3 residues coordinate substrate: Asp139, Glu154, and Arg174. Positions 189, 191, 193, 195, and 197 each coordinate Ca(2+). Positions 205 and 222 each coordinate substrate. Residues His330, Asp336, Asp338, Asp340, Lys342, Glu344, Asp353, His354, His366, Asp368, Asp374, Asp376, Arg379, Gly381, Glu383, and Glu389 each coordinate Ca(2+). Arg419 is a substrate binding site. Asp472, Asp474, Val476, and Glu478 together coordinate Ca(2+). 516–518 serves as a coordination point for substrate; that stretch reads NGT. Asn527, Phe529, Asp531, Arg533, Glu535, Asn576, and Ala578 together coordinate Ca(2+). Tyr579 lines the substrate pocket. Asn580 provides a ligand contact to Ca(2+).

This sequence belongs to the polysaccharide lyase 11 family. In terms of assembly, monomer. The cofactor is Mn(2+). It depends on Zn(2+) as a cofactor. Requires Co(2+) as cofactor. Ca(2+) serves as cofactor.

The protein localises to the secreted. It carries out the reaction Exotype eliminative cleavage of alpha-L-rhamnopyranosyl-(1-&gt;4)-alpha-D-galactopyranosyluronic acid bonds of rhamnogalacturonan I oligosaccharides containing alpha-L-rhamnopyranose at the reducing end and 4-deoxy-4,5-unsaturated D-galactopyranosyluronic acid at the non-reducing end. The products are the disaccharide 2-O-(4-deoxy-beta-L-threo-hex-4-enopyranuronosyl)-alpha-L-rhamnopyranose and the shortened rhamnogalacturonan oligosaccharide containing one 4-deoxy-4,5-unsaturated D-galactopyranosyluronic acid at the non-reducing end.. Functionally, pectinolytic enzyme that degrades type I rhamnogalacturonan from plant cell walls and releases disaccharide products. Degrades rhamnogalacturonan, polygalacturonic acid and pectic acid. Has very low activity on pectin. The sequence is that of Rhamnogalacturonan exolyase YesX (yesX) from Bacillus subtilis (strain 168).